We begin with the raw amino-acid sequence, 691 residues long: Methionine--tRNA ligase (691 aa).

The 'HIGH' region signature appears at 14-24 (PYANGPFHLGH). Zn(2+) contacts are provided by C148, C151, C161, and C164. The 'KMSKS' region motif lies at 344 to 348 (KMSKS). Residue K347 participates in ATP binding. Positions 585-691 (DFDRVDLRVA…PGAKPGMRVR (107 aa)) constitute a tRNA-binding domain.

The protein belongs to the class-I aminoacyl-tRNA synthetase family. MetG type 1 subfamily. Homodimer. Zn(2+) serves as cofactor.

The protein resides in the cytoplasm. The catalysed reaction is tRNA(Met) + L-methionine + ATP = L-methionyl-tRNA(Met) + AMP + diphosphate. Is required not only for elongation of protein synthesis but also for the initiation of all mRNA translation through initiator tRNA(fMet) aminoacylation. This chain is Methionine--tRNA ligase, found in Verminephrobacter eiseniae (strain EF01-2).